Consider the following 449-residue polypeptide: Glucose-6-phosphate isomerase (449 aa).

The Proton donor role is filled by Glu-291. Active-site residues include His-312 and Lys-426.

This sequence belongs to the GPI family.

It localises to the cytoplasm. It catalyses the reaction alpha-D-glucose 6-phosphate = beta-D-fructose 6-phosphate. Its pathway is carbohydrate biosynthesis; gluconeogenesis. The protein operates within carbohydrate degradation; glycolysis; D-glyceraldehyde 3-phosphate and glycerone phosphate from D-glucose: step 2/4. Functionally, catalyzes the reversible isomerization of glucose-6-phosphate to fructose-6-phosphate. This chain is Glucose-6-phosphate isomerase, found in Streptococcus gordonii (strain Challis / ATCC 35105 / BCRC 15272 / CH1 / DL1 / V288).